We begin with the raw amino-acid sequence, 841 residues long: DNA ligase (841 aa).

Residues 54–58, 103–104, and Glu143 each bind NAD(+); these read DAEYD and SL. Lys145 acts as the N6-AMP-lysine intermediate in catalysis. Residues Arg166, Glu203, Lys321, and Lys345 each contribute to the NAD(+) site. The Zn(2+) site is built by Cys471, Cys474, Cys489, and Cys495. Residues 554-575 are disordered; that stretch reads KTVAESDQMPSEGSSVGASGKH. Residues 561–570 show a composition bias toward polar residues; that stretch reads QMPSEGSSVG. Residues 764 to 841 form the BRCT domain; it reads GINKAVAGKT…SEAELLTLLG (78 aa).

This sequence belongs to the NAD-dependent DNA ligase family. LigA subfamily. Mg(2+) serves as cofactor. Mn(2+) is required as a cofactor.

It catalyses the reaction NAD(+) + (deoxyribonucleotide)n-3'-hydroxyl + 5'-phospho-(deoxyribonucleotide)m = (deoxyribonucleotide)n+m + AMP + beta-nicotinamide D-nucleotide.. Functionally, DNA ligase that catalyzes the formation of phosphodiester linkages between 5'-phosphoryl and 3'-hydroxyl groups in double-stranded DNA using NAD as a coenzyme and as the energy source for the reaction. It is essential for DNA replication and repair of damaged DNA. This chain is DNA ligase, found in Neisseria meningitidis serogroup C (strain 053442).